A 124-amino-acid chain; its full sequence is Chemotaxis protein CheY1 (124 aa).

The Response regulatory domain occupies 2 to 120 (KLLVVDDSST…VLKEKLEVVL (119 aa)). D7, D8, D53, and N55 together coordinate Mg(2+). A 4-aspartylphosphate modification is found at D53.

As to quaternary structure, interacts (when phosphorylated) with FliM. The cofactor is Mg(2+). Post-translationally, phosphorylated by CheAY. Dephosphorylated (inactivated) by CheZ.

It localises to the cytoplasm. Its function is as follows. Chemotactic response regulator protein that modulates the rotation direction of bacterial flagellar motors. Plays an important role in the colonization and infection of Helicobacter pylori. Upon phosphorylation by CheA, interacts with the flagellar motor protein FliM to cause clockwise flagellar rotation and bacterial reversals, as opposed to straight swimming when CheY1 is not phosphorylated. The chain is Chemotaxis protein CheY1 from Helicobacter pylori (strain ATCC 700392 / 26695) (Campylobacter pylori).